The primary structure comprises 260 residues: Phosphatidate cytidylyltransferase (260 aa).

7 consecutive transmembrane segments (helical) span residues 9-29 (IIAL…LMLF), 46-66 (MIKF…IIML), 70-90 (AGEW…FIVL), 102-122 (FMDA…FMYF), 130-150 (LRYI…AYIF), 172-192 (FFGG…FVDL), and 196-216 (IWLL…GDLV).

This sequence belongs to the CDS family.

The protein localises to the cell membrane. The catalysed reaction is a 1,2-diacyl-sn-glycero-3-phosphate + CTP + H(+) = a CDP-1,2-diacyl-sn-glycerol + diphosphate. The protein operates within phospholipid metabolism; CDP-diacylglycerol biosynthesis; CDP-diacylglycerol from sn-glycerol 3-phosphate: step 3/3. The sequence is that of Phosphatidate cytidylyltransferase (cdsA) from Staphylococcus epidermidis (strain ATCC 35984 / DSM 28319 / BCRC 17069 / CCUG 31568 / BM 3577 / RP62A).